Here is a 163-residue protein sequence, read N- to C-terminus: Endoribonuclease YbeY (163 aa).

Zn(2+) is bound by residues His129, His133, and His139.

The protein belongs to the endoribonuclease YbeY family. Zn(2+) is required as a cofactor.

It localises to the cytoplasm. Single strand-specific metallo-endoribonuclease involved in late-stage 70S ribosome quality control and in maturation of the 3' terminus of the 16S rRNA. The polypeptide is Endoribonuclease YbeY (Picosynechococcus sp. (strain ATCC 27264 / PCC 7002 / PR-6) (Agmenellum quadruplicatum)).